A 317-amino-acid chain; its full sequence is Tenomodulin (317 aa).

At 1-30 (MAKNPPENCEDCHILNAEAFKSKKICKSLK) the chain is on the cytoplasmic side. The helical; Signal-anchor for type II membrane protein transmembrane segment at 31 to 50 (ICGLVFGILALTLIVLFWGS) threads the bilayer. Residues 51-317 (KHFWPEVPKK…WWVARMLGRV (267 aa)) are Extracellular-facing. The 94-residue stretch at 93–186 (GNGTDETLEV…ICDNVTMYWI (94 aa)) folds into the BRICHOS domain. Asn-94 is a glycosylation site (N-linked (GlcNAc...) asparagine). A disulfide bridge connects residues Cys-120 and Cys-178. An N-linked (GlcNAc...) asparagine glycan is attached at Asn-180. At Ser-239 the chain carries Phosphoserine.

It belongs to the chondromodulin-1 family. In terms of tissue distribution, highly expressed in hypovascular connective tissues such as tendons. Also has strong expression in adipose tissue.

Its subcellular location is the membrane. It localises to the nucleus envelope. The protein resides in the cytoplasm. May be an angiogenesis inhibitor. The protein is Tenomodulin (TNMD) of Homo sapiens (Human).